The following is a 1437-amino-acid chain: uncharacterized protein (1437 aa).

The signal sequence occupies residues 1 to 25; it reads MRRGCRHHLAAVVLLIATFPPLAYN. The Extracellular portion of the chain corresponds to 26 to 1326; sequence QNIGGINQNI…SRIKENYFKW (1301 aa). N-linked (GlcNAc...) asparagine glycans are attached at residues Asn103, Asn315, Asn364, Asn492, Asn605, Asn676, and Asn914. An NIDO domain is found at 193–356; sequence AFFGQQASQA…GRYMFRVDDV (164 aa). The region spanning 648-829 is the AMOP domain; that stretch reads VKEKSREMCH…FRCQMFYWRR (182 aa). The chain crosses the membrane as a helical span at residues 1327-1347; the sequence is LAVIAGIVGIIIVILLIFLVF. The Cytoplasmic portion of the chain corresponds to 1348 to 1437; it reads WCIKRKKLQE…QGMLGLNTSV (90 aa). The interval 1394–1419 is disordered; that stretch reads PRTVAMPPPRGTTATPMTLEPRGFSP.

It localises to the membrane. This is an uncharacterized protein from Caenorhabditis elegans.